A 101-amino-acid chain; its full sequence is Thrombin-like enzyme okinaxobin-1 (101 aa).

Residues 1 to 16 form the signal peptide; the sequence is LIRVLANLLILQLSYA. The propeptide occupies 17–22; it reads QKSSEL. Positions 23–101 constitute a Peptidase S1 domain; the sequence is VIGGDECNIN…PKKKYFFRCR (79 aa). Cys50 and Cys66 are joined by a disulfide. Residue His65 is the Charge relay system of the active site.

The protein belongs to the peptidase S1 family. Snake venom subfamily. As to quaternary structure, monomer. Glycosylated. Expressed by the venom gland.

The protein localises to the secreted. Its activity is regulated as follows. Strongly inactivated by diisopropylfluorophosphate (DFP) and phenylmethanesulfonyl fluoride (PMSF), and to a lesser extent by tosyl-L-lysine chloromethyl ketone (TLCK). In terms of biological role, thrombin-like snake venom serine protease that releases specifically fibrinopeptide B from fibrinogen (FGB) to form fibrin clots. Shows a preferential cleavage at Arg-|-Gly bonds in fibrinogen beta chains. Cleaves fibrinogen beta chains preferentially to alpha chains. This Ovophis okinavensis (Ryukyu Island pit viper) protein is Thrombin-like enzyme okinaxobin-1.